A 633-amino-acid polypeptide reads, in one-letter code: Threonine--tRNA ligase (633 aa).

Residues Met-1–Thr-61 enclose the TGS domain. Residues Asp-242–Pro-533 form a catalytic region. Residues Cys-333, His-384, and His-510 each coordinate Zn(2+).

It belongs to the class-II aminoacyl-tRNA synthetase family. In terms of assembly, homodimer. It depends on Zn(2+) as a cofactor.

The protein resides in the cytoplasm. It catalyses the reaction tRNA(Thr) + L-threonine + ATP = L-threonyl-tRNA(Thr) + AMP + diphosphate + H(+). Its function is as follows. Catalyzes the attachment of threonine to tRNA(Thr) in a two-step reaction: L-threonine is first activated by ATP to form Thr-AMP and then transferred to the acceptor end of tRNA(Thr). Also edits incorrectly charged L-seryl-tRNA(Thr). The polypeptide is Threonine--tRNA ligase (Ehrlichia chaffeensis (strain ATCC CRL-10679 / Arkansas)).